Reading from the N-terminus, the 95-residue chain is Small ribosomal subunit protein uS19 (95 aa).

Belongs to the universal ribosomal protein uS19 family.

Protein S19 forms a complex with S13 that binds strongly to the 16S ribosomal RNA. This chain is Small ribosomal subunit protein uS19, found in Thermosipho melanesiensis (strain DSM 12029 / CIP 104789 / BI429).